Consider the following 1481-residue polypeptide: Protein shortage in chiasmata 1 ortholog (1481 aa).

Disordered regions lie at residues 479–498 (TDVHQLHPQKRPIPSSEKEV) and 512–560 (KSKV…IQAS). Over residues 513–531 (SKVEANPKNDQEPEARIMQ) the composition is skewed to basic and acidic residues. A compositionally biased stretch (low complexity) spans 543-560 (SSQVPSAESASSSQIQAS).

Belongs to the XPF family. Highly divergent. Interacts with TEX11. Interacts with SPO16. As to expression, mainly expressed in adult testis.

Its subcellular location is the chromosome. In terms of biological role, ATPase required during meiosis for the formation of crossover recombination intermediates. Binds DNA: preferentially binds to single-stranded DNA and DNA branched structures. Does not show nuclease activity in vitro, but shows ATPase activity, which is stimulated by the presence of single-stranded DNA. Plays a key role in homologous recombination and crossing-over in meiotic prophase I in male and female germ cells. Required for proper synaptonemal complex assembly and homologous chromosome pairing. Required for recruitment of TEX11 and MSH4 to recombination intermediates. The sequence is that of Protein shortage in chiasmata 1 ortholog from Mus musculus (Mouse).